The following is a 490-amino-acid chain: Cytochrome P450 monooxygenase anuE (490 aa).

C405 contributes to the heme binding site.

Belongs to the cytochrome P450 family. Heme is required as a cofactor.

The enzyme catalyses 2-hydroxymethyl-3-pentylphenol + reduced [NADPH--hemoprotein reductase] + O2 = (8S)-annullatin E + oxidized [NADPH--hemoprotein reductase] + H2O + H(+). It functions in the pathway secondary metabolite biosynthesis. In terms of biological role, cytochrome P450 monooxygenase; part of the gene cluster that mediates the biosynthesis of annullatin D, an alkylated aromatic polyketide with a fused dihydrobenzofuran lactone ring system that exhibits potent agonistic activities toward the cannabinoid receptors. Within the pathway, anuE catalyzes the hydroxylation of 2-hydroxymethyl-3-pentylphenol at the side chain to produce (8S)-annullatin E. The annullatin backbone 2-hydroxymethyl-3-pentylphenol is assembled from one acetyl-CoA starter unit and 5 malonyl-CoA elongation units by cooperation of the highly reducing polyketide synthase anuA, the short-chain dehydrogenase anuB and the oxidoreductase anuC, before being hydroxylated at the C-5 alkyl chain by the cytochrome P450 monooxygenase anuE to form (8S)-annullatin E. The prenyltransferase anuH subsequently installs one isoprenyl group at the benzene ring to form (8S)-annullatin J. Enzymatic or nonenzymatic dihydro-benzofuran ring formation between the prenyl and the phenolic hydroxyl groups in (8S)-annullatin J results in two diastereomers (2S,9S)-annullatin H and compound 12. The intermediate (2S,9S)-annullatin H is then converted to (2S,9S)-annullatin D by the FAD-linked oxidoreductase anuG-catalyzed five-member lactone ring formation. The isomer 12 acts as a substrate for the short-chain dehydrogenase anuF and is oxidized to (2R)-annullatin F, which is subsequently acetylated by an acetyltransferase leading to (2R)-annullatin G formation. The remaining enzymes identified within the cluster, anuD, anuI and anuJ, seem not to be involved in annullatin biosynthesis. This chain is Cytochrome P450 monooxygenase anuE, found in Penicillium roqueforti (strain FM164).